Reading from the N-terminus, the 366-residue chain is Ribosomal RNA large subunit methyltransferase M (366 aa).

S-adenosyl-L-methionine-binding positions include S188, C221–G224, D240, D260, and D277. Residue K306 is the Proton acceptor of the active site.

This sequence belongs to the class I-like SAM-binding methyltransferase superfamily. RNA methyltransferase RlmE family. RlmM subfamily. In terms of assembly, monomer.

Its subcellular location is the cytoplasm. The catalysed reaction is cytidine(2498) in 23S rRNA + S-adenosyl-L-methionine = 2'-O-methylcytidine(2498) in 23S rRNA + S-adenosyl-L-homocysteine + H(+). Functionally, catalyzes the 2'-O-methylation at nucleotide C2498 in 23S rRNA. This is Ribosomal RNA large subunit methyltransferase M from Salmonella agona (strain SL483).